A 620-amino-acid polypeptide reads, in one-letter code: UvrABC system protein C (620 aa).

One can recognise a GIY-YIG domain in the interval 13 to 92 (DKPGVYIMKN…IKKYSPRYNI (80 aa)). In terms of domain architecture, UVR spans 204–239 (TSIIKNLKLEMEKAAEELEFEKAAKIRDRILAIELI).

This sequence belongs to the UvrC family. Interacts with UvrB in an incision complex.

The protein resides in the cytoplasm. Its function is as follows. The UvrABC repair system catalyzes the recognition and processing of DNA lesions. UvrC both incises the 5' and 3' sides of the lesion. The N-terminal half is responsible for the 3' incision and the C-terminal half is responsible for the 5' incision. This is UvrABC system protein C from Clostridium perfringens (strain SM101 / Type A).